The primary structure comprises 306 residues: CRISPR-associated endonuclease Cas1 (306 aa).

Residues E143, H210, and D223 each coordinate Mn(2+).

Belongs to the CRISPR-associated endonuclease Cas1 family. Homodimer, forms a heterotetramer with a Cas2 homodimer. Mg(2+) is required as a cofactor. The cofactor is Mn(2+).

CRISPR (clustered regularly interspaced short palindromic repeat), is an adaptive immune system that provides protection against mobile genetic elements (viruses, transposable elements and conjugative plasmids). CRISPR clusters contain spacers, sequences complementary to antecedent mobile elements, and target invading nucleic acids. CRISPR clusters are transcribed and processed into CRISPR RNA (crRNA). Acts as a dsDNA endonuclease. Involved in the integration of spacer DNA into the CRISPR cassette. The protein is CRISPR-associated endonuclease Cas1 of Geobacter sulfurreducens (strain ATCC 51573 / DSM 12127 / PCA).